The following is a 567-amino-acid chain: Nucleolus and neural progenitor protein (567 aa).

Residue S265 is modified to Phosphoserine. Residues S437–P457 are disordered. The tract at residues R442–K460 is nuclear localization signal.

It belongs to the nepro family.

It localises to the nucleus. Its subcellular location is the nucleolus. Its function is as follows. May play a role in cortex development as part of the Notch signaling pathway. Downstream of Notch may repress the expression of proneural genes and inhibit neuronal differentiation thereby maintaining neural progenitors. May also play a role in preimplentation embryo development. This chain is Nucleolus and neural progenitor protein, found in Homo sapiens (Human).